Reading from the N-terminus, the 344-residue chain is Alkyl hydroperoxide reductase Rv2159c (344 aa).

Residues Ala-49–Gly-50 form an important for interaction with PknI region. Cys-84 (cysteine sulfenic acid (-SOH) intermediate) is an active-site residue.

This sequence belongs to the AhpD family. Interacts with the serine/threonine-protein kinase PknI. The PknI-Rv2159c interaction is mediated through phosphorylation independent physical interaction.

Its activity is regulated as follows. Interaction with PknI increases the peroxidase activity by several folds. In terms of biological role, involved in protection against oxidative stresses. May play a significant role in maintaining the cellular homeostasis during stress and virulence of M.tuberculosis. In vitro, catalyzes the decomposition of cumene hydroperoxide (CHP) to acetophenone. The sequence is that of Alkyl hydroperoxide reductase Rv2159c from Mycobacterium tuberculosis (strain ATCC 25618 / H37Rv).